The chain runs to 206 residues: Protein GrpE (206 aa).

Residues 1 to 18 (MNNEDKKLQDEQLQKETV) show a composition bias toward basic and acidic residues. The tract at residues 1 to 21 (MNNEDKKLQDEQLQKETVEAA) is disordered.

Belongs to the GrpE family. Homodimer.

It is found in the cytoplasm. Its function is as follows. Participates actively in the response to hyperosmotic and heat shock by preventing the aggregation of stress-denatured proteins, in association with DnaK and GrpE. It is the nucleotide exchange factor for DnaK and may function as a thermosensor. Unfolded proteins bind initially to DnaJ; upon interaction with the DnaJ-bound protein, DnaK hydrolyzes its bound ATP, resulting in the formation of a stable complex. GrpE releases ADP from DnaK; ATP binding to DnaK triggers the release of the substrate protein, thus completing the reaction cycle. Several rounds of ATP-dependent interactions between DnaJ, DnaK and GrpE are required for fully efficient folding. This is Protein GrpE from Photobacterium profundum (strain SS9).